A 375-amino-acid chain; its full sequence is Probable trehalose-phosphate phosphatase 7 (375 aa).

This sequence belongs to the trehalose phosphatase family. A divalent metal cation is required as a cofactor.

It carries out the reaction alpha,alpha-trehalose 6-phosphate + H2O = alpha,alpha-trehalose + phosphate. Its pathway is glycan biosynthesis; trehalose biosynthesis. Removes the phosphate from trehalose 6-phosphate to produce free trehalose. Trehalose accumulation in plant may improve abiotic stress tolerance. The polypeptide is Probable trehalose-phosphate phosphatase 7 (TPP7) (Oryza sativa subsp. japonica (Rice)).